A 184-amino-acid polypeptide reads, in one-letter code: Elongation factor P (184 aa).

This sequence belongs to the elongation factor P family.

The protein localises to the cytoplasm. The protein operates within protein biosynthesis; polypeptide chain elongation. Involved in peptide bond synthesis. Stimulates efficient translation and peptide-bond synthesis on native or reconstituted 70S ribosomes in vitro. Probably functions indirectly by altering the affinity of the ribosome for aminoacyl-tRNA, thus increasing their reactivity as acceptors for peptidyl transferase. The sequence is that of Elongation factor P from Polaromonas sp. (strain JS666 / ATCC BAA-500).